A 443-amino-acid polypeptide reads, in one-letter code: Tol-Pal system protein TolB (443 aa).

Residues 1 to 33 (MKIGIINTKIRTVFSAFACMIAASLVCTMPARA) form the signal peptide.

The protein belongs to the TolB family. In terms of assembly, the Tol-Pal system is composed of five core proteins: the inner membrane proteins TolA, TolQ and TolR, the periplasmic protein TolB and the outer membrane protein Pal. They form a network linking the inner and outer membranes and the peptidoglycan layer.

It is found in the periplasm. Part of the Tol-Pal system, which plays a role in outer membrane invagination during cell division and is important for maintaining outer membrane integrity. The sequence is that of Tol-Pal system protein TolB from Brucella suis biovar 1 (strain 1330).